A 309-amino-acid polypeptide reads, in one-letter code: GTP cyclohydrolase MptA 2 (309 aa).

Belongs to the GTP cyclohydrolase IV family. As to quaternary structure, homodimer. Fe(2+) is required as a cofactor.

The enzyme catalyses GTP + H2O = 7,8-dihydroneopterin 2',3'-cyclic phosphate + formate + diphosphate + H(+). Its pathway is cofactor biosynthesis; 5,6,7,8-tetrahydromethanopterin biosynthesis. Functionally, converts GTP to 7,8-dihydro-D-neopterin 2',3'-cyclic phosphate, the first intermediate in the biosynthesis of coenzyme methanopterin. This Methanocella arvoryzae (strain DSM 22066 / NBRC 105507 / MRE50) protein is GTP cyclohydrolase MptA 2.